Consider the following 546-residue polypeptide: Chaperonin GroEL (546 aa).

ATP contacts are provided by residues 30–33 (TLGP), Lys51, 87–91 (DGTTT), Gly415, and Asp496. Positions 526-546 (PEPKSAPAGGMGGMGGMDGMM) are disordered. The span at 534–546 (GGMGGMGGMDGMM) shows a compositional bias: gly residues.

Belongs to the chaperonin (HSP60) family. As to quaternary structure, forms a cylinder of 14 subunits composed of two heptameric rings stacked back-to-back. Interacts with the co-chaperonin GroES.

The protein localises to the cytoplasm. The catalysed reaction is ATP + H2O + a folded polypeptide = ADP + phosphate + an unfolded polypeptide.. In terms of biological role, together with its co-chaperonin GroES, plays an essential role in assisting protein folding. The GroEL-GroES system forms a nano-cage that allows encapsulation of the non-native substrate proteins and provides a physical environment optimized to promote and accelerate protein folding. This is Chaperonin GroEL from Rhodopseudomonas palustris.